A 757-amino-acid polypeptide reads, in one-letter code: Inhibitor of nuclear factor kappa-B kinase subunit beta (757 aa).

Residues 15 to 300 (WEMKERLGTG…DPQYGPNGCF (286 aa)) form the Protein kinase domain. Residues 21 to 29 (LGTGGFGNV) and lysine 44 contribute to the ATP site. Residue aspartate 145 is the Proton acceptor of the active site. Lysine 163 is covalently cross-linked (Glycyl lysine isopeptide (Lys-Gly) (interchain with G-Cter in ubiquitin)). The residue at position 177 (serine 177) is a Phosphoserine; by TBK1 and PKC/PRKCZ. Position 179 is an S-nitrosocysteine (cysteine 179). Serine 181 carries the post-translational modification Phosphoserine; by TBK1, PKC/PRKCZ and PDPK1. Hydroxyproline is present on proline 191. The tract at residues 458-479 (LLRNNSCLSKMKNAMASTAQQL) is leucine-zipper. Position 670 is a phosphoserine; by autocatalysis (serine 670). Serine 672 is modified (phosphoserine). A phosphoserine; by autocatalysis mark is found at serine 675, serine 682, serine 689, serine 692, serine 697, serine 705, serine 733, and serine 740. The segment at 682–703 (SHPGHLMSQPSSACDSLPDSDK) is disordered. The tract at residues 737–742 (LDWSWL) is NEMO-binding.

This sequence belongs to the protein kinase superfamily. Ser/Thr protein kinase family. I-kappa-B kinase subfamily. As to quaternary structure, component of the I-kappa-B-kinase (IKK) core complex consisting of CHUK, IKBKB and IKBKG; probably four alpha/CHUK-beta/IKBKB dimers are associated with four gamma/IKBKG subunits. The IKK core complex seems to associate with regulatory or adapter proteins to form a IKK-signalosome holo-complex. The IKK complex associates with TERF2IP/RAP1, leading to promote IKK-mediated phosphorylation of RELA/p65. Part of a complex composed of NCOA2, NCOA3, CHUK/IKKA, IKBKB, IKBKG and CREBBP. Part of a 70-90 kDa complex at least consisting of CHUK/IKKA, IKBKB, NFKBIA, RELA, ELP1 and MAP3K14. Found in a membrane raft complex, at least composed of BCL10, CARD11, DPP4 and IKBKB. Interacts with SQSTM1 through PRKCZ or PRKCI. Forms an NGF-induced complex with IKBKB, PRKCI and TRAF6. May interact with MAVS/IPS1. Interacts with NALP2. Interacts with TICAM1. Interacts with FAF1; the interaction disrupts the IKK complex formation. Interacts with ATM. Part of a ternary complex consisting of TANK, IKBKB and IKBKG. Interacts with NIBP; the interaction is direct. Interacts with ARRB1 and ARRB2. Interacts with TRIM21. Interacts with NLRC5; prevents IKBKB phosphorylation and kinase activity. Interacts with PDPK1. Interacts with EIF2AK2/PKR. The phosphorylated form interacts with PPM1A and PPM1B. Interacts with ZNF268 isoform 2; the interaction is further increased in a TNF-alpha-dependent manner. Interacts with IKBKE. Interacts with ZC3H12A. Interacts with AKAP13. Interacts with LRRC14; disrupts IKBKB-IKBKG interaction preventing I-kappa-B-kinase (IKK) core complex formation and leading to a decrease of IKBKB phosphorylation and NF-kappaB activation. Interacts with SASH1. Interacts with ARFIP2. Interacts with FKBP5. Upon cytokine stimulation, phosphorylated on Ser-177 and Ser-181 by MEKK1 and/or MAP3K14/NIK as well as TBK1 and PRKCZ; which enhances activity. Phosphorylated by MAP3K7/TAK1 in response to NOD1 and NOD2 signaling, promoting activation and phosphorylation of NF-kappa-B inhibitors, leading to NF-kappa-B activation. Once activated, autophosphorylates on the C-terminal serine cluster; which decreases activity and prevents prolonged activation of the inflammatory response. Phosphorylated by the IKK-related kinases TBK1 and IKBKE, which is associated with reduced CHUK/IKKA and IKBKB activity and NF-kappa-B-dependent gene transcription. Dephosphorylated at Ser-177 and Ser-181 by PPM1A and PPM1B. Post-translationally, ubiquitinated. Monoubiquitination involves TRIM21 that leads to inhibition of Tax-induced NF-kappa-B signaling. 'Ser-163' may not serve as a monoubiquitination site. Ubiquitination on 'Ser-163' may modulate phosphorylation on C-terminal serine residues. In terms of processing, hydroxylated by PHD1/EGLN2, loss of hydroxylation under hypoxic conditions results in activation of NF-kappa-B.

Its subcellular location is the cytoplasm. The protein localises to the nucleus. It localises to the membrane raft. The catalysed reaction is L-seryl-[I-kappa-B protein] + ATP = O-phospho-L-seryl-[I-kappa-B protein] + ADP + H(+). It catalyses the reaction L-seryl-[protein] + ATP = O-phospho-L-seryl-[protein] + ADP + H(+). The enzyme catalyses L-threonyl-[protein] + ATP = O-phospho-L-threonyl-[protein] + ADP + H(+). Serine kinase that plays an essential role in the NF-kappa-B signaling pathway which is activated by multiple stimuli such as inflammatory cytokines, bacterial or viral products, DNA damages or other cellular stresses. Acts as a part of the canonical IKK complex in the conventional pathway of NF-kappa-B activation. Phosphorylates inhibitors of NF-kappa-B on 2 critical serine residues. These modifications allow polyubiquitination of the inhibitors and subsequent degradation by the proteasome. In turn, free NF-kappa-B is translocated into the nucleus and activates the transcription of hundreds of genes involved in immune response, growth control, or protection against apoptosis. In addition to the NF-kappa-B inhibitors, phosphorylates several other components of the signaling pathway including NEMO/IKBKG, NF-kappa-B subunits RELA and NFKB1, as well as IKK-related kinases TBK1 and IKBKE. IKK-related kinase phosphorylations may prevent the overproduction of inflammatory mediators since they exert a negative regulation on canonical IKKs. Phosphorylates FOXO3, mediating the TNF-dependent inactivation of this pro-apoptotic transcription factor. Also phosphorylates other substrates including NAA10, NCOA3, BCL10 and IRS1. Phosphorylates RIPK1 at 'Ser-25' which represses its kinase activity and consequently prevents TNF-mediated RIPK1-dependent cell death. Phosphorylates the C-terminus of IRF5, stimulating IRF5 homodimerization and translocation into the nucleus. This chain is Inhibitor of nuclear factor kappa-B kinase subunit beta (Ikbkb), found in Rattus norvegicus (Rat).